The primary structure comprises 602 residues: Aspartate--tRNA(Asp/Asn) ligase (602 aa).

Glu-175 lines the L-aspartate pocket. Residues 199-202 (QIFK) form an aspartate region. Arg-221 is an L-aspartate binding site. Residues 221–223 (RDE) and Gln-230 contribute to the ATP site. Residue His-458 participates in L-aspartate binding. Glu-492 is a binding site for ATP. Arg-499 provides a ligand contact to L-aspartate. Residue 544–547 (GLDR) coordinates ATP.

It belongs to the class-II aminoacyl-tRNA synthetase family. Type 1 subfamily. Homodimer.

It is found in the cytoplasm. It catalyses the reaction tRNA(Asx) + L-aspartate + ATP = L-aspartyl-tRNA(Asx) + AMP + diphosphate. Functionally, aspartyl-tRNA synthetase with relaxed tRNA specificity since it is able to aspartylate not only its cognate tRNA(Asp) but also tRNA(Asn). Reaction proceeds in two steps: L-aspartate is first activated by ATP to form Asp-AMP and then transferred to the acceptor end of tRNA(Asp/Asn). The protein is Aspartate--tRNA(Asp/Asn) ligase of Cupriavidus necator (strain ATCC 17699 / DSM 428 / KCTC 22496 / NCIMB 10442 / H16 / Stanier 337) (Ralstonia eutropha).